The chain runs to 1132 residues: NUT family member 1 (1132 aa).

7 disordered regions span residues 1–56 (MASD…SVFS), 337–365 (AASK…EIPP), 383–405 (LATG…EGMY), 476–584 (EEED…VERR), 693–714 (RGTP…GERD), 873–892 (DASS…NSFS), and 922–1017 (PLNV…DEEL). Over residues 21-36 (APSPSPALPFLPPTSD) the composition is skewed to pro residues. Residues 337–352 (AASKTRAPRRRQRKAQ) are compositionally biased toward basic residues. Over residues 395–404 (EGQQQEEEGM) the composition is skewed to acidic residues. 3 stretches are compositionally biased toward polar residues: residues 487-497 (SGAQLDSSPSG), 697-706 (MAQSYDQNPS), and 883-892 (EAGSRGNSFS). Basic and acidic residues predominate over residues 932–942 (GEGRVDPDLSK). Residues 950–971 (QESQESYTTGTPKATSSHQGLG) are compositionally biased toward polar residues. A phosphoserine mark is found at Ser-1026, Ser-1029, and Ser-1031. The segment at 1031-1132 (SPREHPLSPH…GRRKKRRRSQ (102 aa)) is disordered. Gln-1046 carries the N5-methylglutamine modification. Residues 1123 to 1132 (GRRKKRRRSQ) show a composition bias toward basic residues.

Belongs to the NUT family. Post-translationally, methylated at Gln-1046 by N6AMT1. In terms of processing, phosphorylation on Ser-1026, Ser-1029 or Ser-1031 is important for cytoplasmic export. Specifically expressed in testis.

The protein resides in the cytoplasm. Its subcellular location is the nucleus. Plays a role in the regulation of proliferation. Regulates TERT expression by modulating SP1 binding to TERT promoter binding sites. This is NUT family member 1 from Homo sapiens (Human).